A 220-amino-acid chain; its full sequence is Ribose-5-phosphate isomerase A (220 aa).

Residues 28–31 (TGST), 81–84 (DGAD), and 94–97 (KGGG) contribute to the substrate site. The active-site Proton acceptor is the E103. K121 lines the substrate pocket.

It belongs to the ribose 5-phosphate isomerase family. Homodimer.

It carries out the reaction aldehydo-D-ribose 5-phosphate = D-ribulose 5-phosphate. It functions in the pathway carbohydrate degradation; pentose phosphate pathway; D-ribose 5-phosphate from D-ribulose 5-phosphate (non-oxidative stage): step 1/1. In terms of biological role, catalyzes the reversible conversion of ribose-5-phosphate to ribulose 5-phosphate. The polypeptide is Ribose-5-phosphate isomerase A (Shewanella putrefaciens (strain CN-32 / ATCC BAA-453)).